Consider the following 1353-residue polypeptide: MSSPMPDCTSKCRSLKHALDVLSVVTKGSENQIKAFLSSHCYNAATIKDVFGRNALHLVSSCGKKGVLDWLIQKGVDLLVKDKESGWTALHRSIFYGHIDCVWSLLKHGVSLYIQDKEGLSALDLVMKDRPTHVVFKNTDPTDVYTWGDNTNFTLGHGSQNSKHHPELVDLFSRSGIYIKQVVLCKFHSVFLSQKGQVYTCGHGPGGRLGHGDEQTCLVPRLVEGLNGHNCSQVAAAKDHTVVLTEDGCVYTFGLNIFHQLGIIPPPSSCNVPRQIQAKYLKGRTIIGVAAGRFHTVLWTREAVYTMGLNGGQLGCLLDPNGEKCVTAPRQVSALHHKDIALSLVAASDGATVCVTTRGDIYLLADYQCKKMASKQLNLKKVLVSGGHMEYKVDPEHLKENGGQKICILAMDGAGRVFCWRSVNSSLKQCRWAYPRQVFISDIALNRNEILFVTQDGEGFRGRWFEEKRKSSEKKEILSNLHNSSSDVSYVSDINSVYERIRLEKLTFAHRAVSVSTDPSGCNFAILQSDPKTSLYEIPAVSSSSFFEEFGKLLREADEMDSIHDVTFQVGNRLFPAHKYILAVHSDFFQKLFLSDGNTSEFTDIYQKDEDSAGCHLFVVEKVHPDMFEYLLQFIYTDTCDFLTHGFKPRIHLNKNPEEYQGTLNSHLNKVNFHEDDNQKSAFEVYKSNQAQTVSERQKSKPKSCKKGKNIREDDPVRMLQTVAKKFDFSNLSSRLDGVRFENEKINVIAKNTGNKLKLSQKKCSFLCDVTMKSVDGKEFPCHKCVLCARLEYFHSMLSSSWIEASSCAALEMPIHSDILKVILDYLYTDEAVVIKESQNVDFICSVLVVADQLLITRLKEICEVALTEKLTLKNAAMLLEFAAMYSAKQLKLSCLQFIGLNMAALLEARSLDVLSDGVLKDLSEFYRKMIPAMDRRVITPYQDGPDISYLEVEDGDIFLKEEINMEQNHSETMFKKAKTKAKKKPRKRSDSSGGYNLSDIIQSPSSTGLLKSGKTNSVESLPELLTSDSEGSYAGVGSPRDLQSPDFTTGFHSDKIEAKVKPYVNGTSPVYSREDLKPWEKSPILKISAPQPIPSNRIDTTSSASWVAGSFSPVSPPVVDLRTIMEIEESRQKCGATPKSHLGKTVSHGVKLSQKQRKMIALTTKENNSGMNSMETVLFTPSKAPKPVNAWASSLHSVSSKSFRDFLLEEKKSVTSHSSGDHVKKVSFKGIENSQAPKIVRCSTHGTPGPEGNHISDLPLLDSPNPWLSSSVTAPSMVAPVTFASIVEEELQQEAALIRSREKPLALIQIEEHAIQDLLVFYEAFGNPEEFVIVERTPQGPLAVPMWNKHGC.

ANK repeat units lie at residues 51 to 80 (FGRN…DLLV) and 85 to 114 (SGWT…SLYI). RCC1 repeat units lie at residues 141–194 (PTDV…FLSQ), 195–246 (KGQV…VLTE), and 248–301 (GCVY…LWTR). BTB domains lie at 564-644 (HDVT…DFLT) and 768-836 (CDVT…VVIK). An ANK 3 repeat occupies 806–835 (SSCAALEMPIHSDILKVILDYLYTDEAVVI). The disordered stretch occupies residues 970 to 1001 (HSETMFKKAKTKAKKKPRKRSDSSGGYNLSDI). Basic residues predominate over residues 976 to 988 (KKAKTKAKKKPRK). A Phosphoserine modification is found at Ser990. Residues 992-1001 (SSGGYNLSDI) are compositionally biased toward polar residues. A phosphoserine mark is found at Ser1004, Ser1030, Ser1033, Ser1039, Ser1045, Ser1054, Ser1083, Ser1111, Ser1113, and Ser1116. The disordered stretch occupies residues 1134 to 1155 (KCGATPKSHLGKTVSHGVKLSQ).

Interacts with the PH domain of BTK. Isoform 2 does not interact with BTK. In terms of tissue distribution, expressed in DeFew, HEK293T, HeLa and in Jurkat, MC3 and NB4 lymphoid cells (at protein level). Isoform 1 is the predominant isoform expressed in all examined tissues and cell lines. Highly expressed in hemopoietic tissues (fetal liver, spleen, lymph node, thymus, peripheral blood leukocytes and bone marrow). Weakly or not expressed in other tissues.

It is found in the cytoplasm. It localises to the membrane. The protein resides in the nucleus. Acts as an inhibitor of BTK tyrosine kinase activity, thereby playing a role in B-cell development. Down-regulates BTK kinase activity, leading to interference with BTK-mediated calcium mobilization and NF-kappa-B-driven transcription. This chain is Inhibitor of Bruton tyrosine kinase (IBTK), found in Homo sapiens (Human).